Reading from the N-terminus, the 151-residue chain is Putative pre-16S rRNA nuclease (151 aa).

It belongs to the YqgF nuclease family.

It is found in the cytoplasm. Its function is as follows. Could be a nuclease involved in processing of the 5'-end of pre-16S rRNA. The chain is Putative pre-16S rRNA nuclease from Bifidobacterium adolescentis (strain ATCC 15703 / DSM 20083 / NCTC 11814 / E194a).